Reading from the N-terminus, the 400-residue chain is Tryptophan synthase beta chain (400 aa).

N6-(pyridoxal phosphate)lysine is present on lysine 92.

It belongs to the TrpB family. Tetramer of two alpha and two beta chains. It depends on pyridoxal 5'-phosphate as a cofactor.

The enzyme catalyses (1S,2R)-1-C-(indol-3-yl)glycerol 3-phosphate + L-serine = D-glyceraldehyde 3-phosphate + L-tryptophan + H2O. It participates in amino-acid biosynthesis; L-tryptophan biosynthesis; L-tryptophan from chorismate: step 5/5. In terms of biological role, the beta subunit is responsible for the synthesis of L-tryptophan from indole and L-serine. This chain is Tryptophan synthase beta chain, found in Neisseria meningitidis serogroup C (strain 053442).